The sequence spans 1017 residues: Nonsense-mediated mRNA decay factor SMG5 (1017 aa).

Position 2 is an N-acetylserine (serine 2). Phosphoserine is present on residues serine 2 and serine 423. Disordered stretches follow at residues 406–562 (GENP…PSEA) and 597–640 (TEPN…CRNE). Basic residues predominate over residues 448-467 (KSRKHSRLSCLRRRRRHHPP). Low complexity predominate over residues 486-496 (DSAQASDGSDS). Over residues 620 to 629 (ASEDGSESEG) the composition is skewed to acidic residues. A coiled-coil region spans residues 798–842 (AQSEQESLLQQAQAQFRMAEEEARRNRLMRDMAQLRLQLEVSQLE). The PINc domain maps to 873–996 (RQLATSGRFI…GPMQAALQAA (124 aa)).

As to quaternary structure, interacts with TERT, PPP2CA and SMG1. Part of a complex that contains SMG1, SMG5, SMG7, PPP2CA, a short isoform of UPF3A (isoform UPF3AS, but not isoform UPF3AL) and phosphorylated UPF1. Not detected in complexes that contain unphosphorylated UPF1.

The protein resides in the cytoplasm. Its subcellular location is the nucleus. Plays a role in nonsense-mediated mRNA decay. Does not have RNase activity by itself. Promotes dephosphorylation of UPF1. Together with SMG7 is thought to provide a link to the mRNA degradation machinery involving exonucleolytic pathways, and to serve as an adapter for UPF1 to protein phosphatase 2A (PP2A), thereby triggering UPF1 dephosphorylation. Necessary for TERT activity. The chain is Nonsense-mediated mRNA decay factor SMG5 from Mus musculus (Mouse).